The sequence spans 216 residues: Nucleoid occlusion factor SlmA (216 aa).

A disordered region spans residues 1–23; sequence MAEQLTLDSIEPEPEKQSAKIEK. Residues 13–23 are compositionally biased toward basic and acidic residues; it reads EPEKQSAKIEK. One can recognise an HTH tetR-type domain in the interval 28–88; the sequence is ERRQQVLTVL…ALIENIESSL (61 aa). The H-T-H motif DNA-binding region spans 51 to 70; sequence TTARLAKEVGVSEAALYRYF.

Belongs to the nucleoid occlusion factor SlmA family. Homodimer. Interacts with FtsZ.

It is found in the cytoplasm. The protein localises to the nucleoid. Required for nucleoid occlusion (NO) phenomenon, which prevents Z-ring formation and cell division over the nucleoid. Acts as a DNA-associated cell division inhibitor that binds simultaneously chromosomal DNA and FtsZ, and disrupts the assembly of FtsZ polymers. SlmA-DNA-binding sequences (SBS) are dispersed on non-Ter regions of the chromosome, preventing FtsZ polymerization at these regions. In Mannheimia succiniciproducens (strain KCTC 0769BP / MBEL55E), this protein is Nucleoid occlusion factor SlmA.